Here is a 107-residue protein sequence, read N- to C-terminus: Homeobox protein HD-3 (107 aa).

The homeobox DNA-binding region spans 6–65 (SKAPRTRMTAGQTRVLMSFFKDNPFPSTTAREKLSKVLGVGPRTVQIWFQNQRQKARGQA).

Its subcellular location is the nucleus. The polypeptide is Homeobox protein HD-3 (HD-3) (Encephalitozoon cuniculi (strain GB-M1) (Microsporidian parasite)).